We begin with the raw amino-acid sequence, 178 residues long: Large ribosomal subunit protein uL6 (178 aa).

This sequence belongs to the universal ribosomal protein uL6 family. As to quaternary structure, part of the 50S ribosomal subunit.

This protein binds to the 23S rRNA, and is important in its secondary structure. It is located near the subunit interface in the base of the L7/L12 stalk, and near the tRNA binding site of the peptidyltransferase center. In Campylobacter curvus (strain 525.92), this protein is Large ribosomal subunit protein uL6.